The sequence spans 139 residues: Small ribosomal subunit protein uS12 (139 aa).

Positions 119-139 (GVDKRRQQRSAYGAKKPKPKS) are disordered.

It belongs to the universal ribosomal protein uS12 family. As to quaternary structure, part of the 30S ribosomal subunit. Contacts proteins S8 and S17. May interact with IF1 in the 30S initiation complex.

In terms of biological role, with S4 and S5 plays an important role in translational accuracy. Its function is as follows. Interacts with and stabilizes bases of the 16S rRNA that are involved in tRNA selection in the A site and with the mRNA backbone. Located at the interface of the 30S and 50S subunits, it traverses the body of the 30S subunit contacting proteins on the other side and probably holding the rRNA structure together. The combined cluster of proteins S8, S12 and S17 appears to hold together the shoulder and platform of the 30S subunit. The chain is Small ribosomal subunit protein uS12 from Mycoplasma genitalium (strain ATCC 33530 / DSM 19775 / NCTC 10195 / G37) (Mycoplasmoides genitalium).